We begin with the raw amino-acid sequence, 957 residues long: Glycine dehydrogenase (decarboxylating) (957 aa).

Lys-708 is modified (N6-(pyridoxal phosphate)lysine).

This sequence belongs to the GcvP family. The glycine cleavage system is composed of four proteins: P, T, L and H. The cofactor is pyridoxal 5'-phosphate.

It carries out the reaction N(6)-[(R)-lipoyl]-L-lysyl-[glycine-cleavage complex H protein] + glycine + H(+) = N(6)-[(R)-S(8)-aminomethyldihydrolipoyl]-L-lysyl-[glycine-cleavage complex H protein] + CO2. The glycine cleavage system catalyzes the degradation of glycine. The P protein binds the alpha-amino group of glycine through its pyridoxal phosphate cofactor; CO(2) is released and the remaining methylamine moiety is then transferred to the lipoamide cofactor of the H protein. In Salmonella paratyphi B (strain ATCC BAA-1250 / SPB7), this protein is Glycine dehydrogenase (decarboxylating).